The sequence spans 186 residues: uncharacterized protein (186 aa).

This is an uncharacterized protein from Acanthamoeba polyphaga (Amoeba).